Consider the following 264-residue polypeptide: Thiazole synthase (264 aa).

Lysine 106 acts as the Schiff-base intermediate with DXP in catalysis. Residues glycine 167, 193-194, and 215-216 contribute to the 1-deoxy-D-xylulose 5-phosphate site; these read AG and NS.

Belongs to the ThiG family. In terms of assembly, homotetramer. Forms heterodimers with either ThiH or ThiS.

It localises to the cytoplasm. The catalysed reaction is [ThiS sulfur-carrier protein]-C-terminal-Gly-aminoethanethioate + 2-iminoacetate + 1-deoxy-D-xylulose 5-phosphate = [ThiS sulfur-carrier protein]-C-terminal Gly-Gly + 2-[(2R,5Z)-2-carboxy-4-methylthiazol-5(2H)-ylidene]ethyl phosphate + 2 H2O + H(+). Its pathway is cofactor biosynthesis; thiamine diphosphate biosynthesis. Functionally, catalyzes the rearrangement of 1-deoxy-D-xylulose 5-phosphate (DXP) to produce the thiazole phosphate moiety of thiamine. Sulfur is provided by the thiocarboxylate moiety of the carrier protein ThiS. In vitro, sulfur can be provided by H(2)S. The sequence is that of Thiazole synthase from Prochlorococcus marinus (strain MIT 9312).